The following is a 240-amino-acid chain: MPKYYCEYCDIYLTHSSPVGRRQHIQGRKHISAKIEYFQNLLREEGITPQNFLGFLGNRAFNNMLGNPMMNNMMPGNFPMHMKHGGMKHHSHYSRHSHRHHMSHGRYNRERHGHHSYSSKYHSHPMHMNSNSIGNPSGFSNGKYSGSFFSSPNAMHGNGKMFNNTIRDLVSNVNIDSDPVKDSQNGERVGDNAIDKVSSGMHDQGDRGDLGDHADHADHAGPVSATDGTANGNDQVSVDA.

A Matrin-type zinc finger spans residues 4–36 (YYCEYCDIYLTHSSPVGRRQHIQGRKHISAKIE). Disordered regions lie at residues 86–122 (GMKH…SKYH) and 175–240 (IDSD…SVDA). 2 stretches are compositionally biased toward basic and acidic residues: residues 178-194 (DPVK…DNAI) and 203-219 (DQGD…HADH). Positions 226–240 (TDGTANGNDQVSVDA) are enriched in polar residues.

Belongs to the U1 small nuclear ribonucleoprotein C family. In terms of assembly, U1 snRNP is composed of the 7 core Sm proteins B/B', D1, D2, D3, E, F and G that assemble in a heptameric protein ring on the Sm site of the small nuclear RNA to form the core snRNP, and at least 3 U1 snRNP-specific proteins U1-70K, U1-A and U1-C. U1-C interacts with U1 snRNA and the 5' splice-site region of the pre-mRNA.

Its subcellular location is the nucleus. Component of the spliceosomal U1 snRNP, which is essential for recognition of the pre-mRNA 5' splice-site and the subsequent assembly of the spliceosome. U1-C is directly involved in initial 5' splice-site recognition for both constitutive and regulated alternative splicing. The interaction with the 5' splice-site seems to precede base-pairing between the pre-mRNA and the U1 snRNA. Stimulates commitment or early (E) complex formation by stabilizing the base pairing of the 5' end of the U1 snRNA and the 5' splice-site region. The sequence is that of U1 small nuclear ribonucleoprotein C from Plasmodium vivax (strain Salvador I).